Reading from the N-terminus, the 106-residue chain is MATLGFVTPEAPFESSKPPIFEGLSPTVYSNPEGFKEKFLRKTRENPVVPIGFLCTAAVLTNGLYCFHQGNSQCSRLMMHTQIAAQGFTIAAILLGLAATAMKSPP.

The Cytoplasmic segment spans residues 1 to 46 (MATLGFVTPEAPFESSKPPIFEGLSPTVYSNPEGFKEKFLRKTREN). Residues 20–106 (IFEGLSPTVY…LAATAMKSPP (87 aa)) form the HIG1 domain. Residues 47–67 (PVVPIGFLCTAAVLTNGLYCF) traverse the membrane as a helical segment. Topologically, residues 68–81 (HQGNSQCSRLMMHT) are extracellular. Residues 82–102 (QIAAQGFTIAAILLGLAATAM) form a helical membrane-spanning segment. Topologically, residues 103 to 106 (KSPP) are cytoplasmic.

It localises to the membrane. The sequence is that of HIG1 domain family member 2B (HIGD2B) from Homo sapiens (Human).